The sequence spans 1388 residues: Rho-associated protein kinase 2 (1388 aa).

A disordered region spans residues 1 to 24; that stretch reads MSRPPPTGKMPGAPEAAAGDGAGA. The region spanning 92–354 is the Protein kinase domain; the sequence is YDVVKVIGRG…VEEIKSASFF (263 aa). ATP contacts are provided by residues 98 to 106 and K121; that span reads IGRGAFGEV. The Proton acceptor role is filled by D214. In terms of domain architecture, AGC-kinase C-terminal spans 357-425; that stretch reads DQWNWDNIRE…FRENLLLSDS (69 aa). The tract at residues 363 to 784 is interaction with PPP1R12A; the sequence is NIRETAAPVV…LNELLKQKDV (422 aa). An interaction with NPM1 region spans residues 373–420; it reads PELSSDIDSSNFDDIEDDKGDVETFPIPKAFVGNQLPFIGFTYFRENL. A Phosphothreonine; by ROCK2 modification is found at T414. Coiled-coil stretches lie at residues 439-1024 and 1052-1131; these read SEES…EKQL and SDTD…IGMD. In terms of domain architecture, REM-1 spans 497–573; the sequence is TLRQLEREKA…LDEANALLRT (77 aa). Positions 513–530 are enriched in basic and acidic residues; the sequence is AEYQRKADHEADKKRNLE. Residues 513–532 form a disordered region; it reads AEYQRKADHEADKKRNLEND. A Phosphotyrosine; by SRC modification is found at Y722. The RhoBD domain occupies 979–1047; that stretch reads TSDVANLANE…LAEIMNRKEP (69 aa). The segment at 979-1047 is RHOA binding; it reads TSDVANLANE…LAEIMNRKEP (69 aa). S1137 is subject to Phosphoserine. In terms of domain architecture, PH spans 1150-1349; the sequence is ESRLEGWLSL…WVSRLVKKIP (200 aa). Residue T1212 is modified to Phosphothreonine. The Phorbol-ester/DAG-type zinc-finger motif lies at 1260–1315; that stretch reads GHEFIPTLYHFPTNCEACMKPLWHMFKPPPALECSRCHIKCHKDHMDKKEEIIAPC. The segment at 1345 to 1388 is disordered; that stretch reads VKKIPKKPPAPDPFARSSPRTSMKIQQNQSIRRPSRQLAPNKPS. S1362 and S1374 each carry phosphoserine. Positions 1362–1376 are enriched in polar residues; sequence SPRTSMKIQQNQSIR.

Belongs to the protein kinase superfamily. AGC Ser/Thr protein kinase family. Homodimer. Interacts with IRS1. Interacts with RAF1. Interacts with RHOA (activated by GTP), RHOB, RHOC. Interacts with PPP1R12A. Interacts with EP300. Interacts with CHORDC1. Interacts with BRCA2. Interacts with NPM1; this interaction enhances its activity. Interacts with SORL1. Interacts with PJVK. Mg(2+) is required as a cofactor. In terms of processing, autophosphorylated. Phosphorylation at Tyr-722 reduces its binding to RHOA and is crucial for focal adhesion dynamics. Dephosphorylation by PTPN11 stimulates its RHOA binding activity. Post-translationally, cleaved by granzyme B during apoptosis. This leads to constitutive activation of the kinase and membrane blebbing. Highly expressed in brain, lung, liver, skeletal muscle, kidney and testis.

The protein resides in the cytoplasm. It is found in the cell membrane. Its subcellular location is the nucleus. It localises to the cytoskeleton. The protein localises to the microtubule organizing center. The protein resides in the centrosome. The enzyme catalyses L-seryl-[protein] + ATP = O-phospho-L-seryl-[protein] + ADP + H(+). The catalysed reaction is L-threonyl-[protein] + ATP = O-phospho-L-threonyl-[protein] + ADP + H(+). Its activity is regulated as follows. Activated by RHOA binding. Inhibited by Y-27632. Functionally, protein kinase which is a key regulator of actin cytoskeleton and cell polarity. Involved in regulation of smooth muscle contraction, actin cytoskeleton organization, stress fiber and focal adhesion formation, neurite retraction, cell adhesion and motility via phosphorylation of ADD1, BRCA2, CNN1, EZR, DPYSL2, EP300, MSN, MYL9/MLC2, NPM1, RDX, PPP1R12A and VIM. Phosphorylates SORL1 and IRF4. Acts as a negative regulator of VEGF-induced angiogenic endothelial cell activation. Positively regulates the activation of p42/MAPK1-p44/MAPK3 and of p90RSK/RPS6KA1 during myogenic differentiation. Plays an important role in the timely initiation of centrosome duplication. Inhibits keratinocyte terminal differentiation. May regulate closure of the eyelids and ventral body wall through organization of actomyosin bundles. Plays a critical role in the regulation of spine and synaptic properties in the hippocampus. Plays a role in placental homeostasis during the perinatal period. Plays an important role in generating the circadian rhythm of the aortic myofilament Ca(2+) sensitivity and vascular contractility by modulating the myosin light chain phosphorylation. The chain is Rho-associated protein kinase 2 (Rock2) from Rattus norvegicus (Rat).